A 290-amino-acid chain; its full sequence is tRNA(Ile)-lysidine synthase, chloroplastic (290 aa).

Residue 33–38 (SGGQDS) participates in ATP binding.

Belongs to the tRNA(Ile)-lysidine synthase family.

The protein resides in the plastid. It is found in the chloroplast. It catalyses the reaction cytidine(34) in tRNA(Ile2) + L-lysine + ATP = lysidine(34) in tRNA(Ile2) + AMP + diphosphate + H(+). Ligates lysine onto the cytidine present at position 34 of the AUA codon-specific tRNA(Ile) that contains the anticodon CAU, in an ATP-dependent manner. Cytidine is converted to lysidine, thus changing the amino acid specificity of the tRNA from methionine to isoleucine. This Cyanidioschyzon merolae (strain NIES-3377 / 10D) (Unicellular red alga) protein is tRNA(Ile)-lysidine synthase, chloroplastic.